Consider the following 373-residue polypeptide: 4-hydroxy-3-methylbut-2-en-1-yl diphosphate synthase (flavodoxin) (373 aa).

[4Fe-4S] cluster contacts are provided by cysteine 269, cysteine 272, cysteine 304, and glutamate 311.

Belongs to the IspG family. It depends on [4Fe-4S] cluster as a cofactor.

It catalyses the reaction (2E)-4-hydroxy-3-methylbut-2-enyl diphosphate + oxidized [flavodoxin] + H2O + 2 H(+) = 2-C-methyl-D-erythritol 2,4-cyclic diphosphate + reduced [flavodoxin]. It functions in the pathway isoprenoid biosynthesis; isopentenyl diphosphate biosynthesis via DXP pathway; isopentenyl diphosphate from 1-deoxy-D-xylulose 5-phosphate: step 5/6. Functionally, converts 2C-methyl-D-erythritol 2,4-cyclodiphosphate (ME-2,4cPP) into 1-hydroxy-2-methyl-2-(E)-butenyl 4-diphosphate. This is 4-hydroxy-3-methylbut-2-en-1-yl diphosphate synthase (flavodoxin) from Baumannia cicadellinicola subsp. Homalodisca coagulata.